Here is a 339-residue protein sequence, read N- to C-terminus: Phenylalanine--tRNA ligase alpha subunit (339 aa).

Glu254 contributes to the Mg(2+) binding site.

Belongs to the class-II aminoacyl-tRNA synthetase family. Phe-tRNA synthetase alpha subunit type 1 subfamily. In terms of assembly, tetramer of two alpha and two beta subunits. It depends on Mg(2+) as a cofactor.

It localises to the cytoplasm. It catalyses the reaction tRNA(Phe) + L-phenylalanine + ATP = L-phenylalanyl-tRNA(Phe) + AMP + diphosphate + H(+). The protein is Phenylalanine--tRNA ligase alpha subunit (pheS) of Chlamydia pneumoniae (Chlamydophila pneumoniae).